The sequence spans 60 residues: Large ribosomal subunit protein bL32 (60 aa).

A disordered region spans residues 1–47 (MAVQQNRKTRSKRGMRRSHDALTSSTLSTDPTTGEKHRRHHVTADGF). A compositionally biased stretch (basic residues) spans 7 to 16 (RKTRSKRGMR).

The protein belongs to the bacterial ribosomal protein bL32 family.

The chain is Large ribosomal subunit protein bL32 from Teredinibacter turnerae (strain ATCC 39867 / T7901).